The chain runs to 209 residues: Protein TIC 20-v, chloroplastic (209 aa).

Residues 1–49 (MAIISQFFAPLPSLTGTLTLTGRSFLPLNLDTQFPKPRLSRDRAATLVL) constitute a chloroplast transit peptide. Transmembrane regions (helical) follow at residues 63-83 (IISAVCYFYPFFDGIQYGKFI), 103-123 (AFKSFPFNGFLIFITLYFVVV), 132-152 (VRFNTMQAIVLDVLLIFPDLL), and 173-193 (TVFLFLLVSLIYGFSACLFGL).

Belongs to the Tic20 family. In terms of assembly, part of the Tic complex. As to expression, expressed in leaves, siliques and roots.

Its subcellular location is the plastid. It is found in the chloroplast inner membrane. Its function is as follows. May be involved in protein precursor import into chloroplasts. Not redundant with TIC20-I, TIC20-II or TIC20-IV. This is Protein TIC 20-v, chloroplastic (TIC20-V) from Arabidopsis thaliana (Mouse-ear cress).